The sequence spans 366 residues: Phospho-N-acetylmuramoyl-pentapeptide-transferase (366 aa).

10 helical membrane-spanning segments follow: residues 27–47 (AALF…INSL), 71–91 (TPTM…LLWA), 93–113 (LSNV…AIGF), 138–158 (FVIA…SGIA), 174–194 (FMIN…VGAG), 205–225 (GLAI…AYLA), 245–265 (LAVV…FNAP), 268–288 (AIFM…TVAV), 294–314 (IVMA…IIQV), and 343–363 (QVVI…LSTL).

It belongs to the glycosyltransferase 4 family. MraY subfamily. Requires Mg(2+) as cofactor.

The protein localises to the cell inner membrane. It catalyses the reaction UDP-N-acetyl-alpha-D-muramoyl-L-alanyl-gamma-D-glutamyl-meso-2,6-diaminopimeloyl-D-alanyl-D-alanine + di-trans,octa-cis-undecaprenyl phosphate = di-trans,octa-cis-undecaprenyl diphospho-N-acetyl-alpha-D-muramoyl-L-alanyl-D-glutamyl-meso-2,6-diaminopimeloyl-D-alanyl-D-alanine + UMP. Its pathway is cell wall biogenesis; peptidoglycan biosynthesis. Catalyzes the initial step of the lipid cycle reactions in the biosynthesis of the cell wall peptidoglycan: transfers peptidoglycan precursor phospho-MurNAc-pentapeptide from UDP-MurNAc-pentapeptide onto the lipid carrier undecaprenyl phosphate, yielding undecaprenyl-pyrophosphoryl-MurNAc-pentapeptide, known as lipid I. This chain is Phospho-N-acetylmuramoyl-pentapeptide-transferase, found in Rhizobium johnstonii (strain DSM 114642 / LMG 32736 / 3841) (Rhizobium leguminosarum bv. viciae).